Consider the following 98-residue polypeptide: NADH-ubiquinone oxidoreductase chain 4L (98 aa).

3 helical membrane passes run 1 to 21 (MTTI…GVLI), 26 to 46 (LLST…LMAL), and 59 to 79 (APLI…ALLV).

The protein belongs to the complex I subunit 4L family. As to quaternary structure, core subunit of respiratory chain NADH dehydrogenase (Complex I) which is composed of 45 different subunits.

It localises to the mitochondrion inner membrane. It catalyses the reaction a ubiquinone + NADH + 5 H(+)(in) = a ubiquinol + NAD(+) + 4 H(+)(out). Core subunit of the mitochondrial membrane respiratory chain NADH dehydrogenase (Complex I) which catalyzes electron transfer from NADH through the respiratory chain, using ubiquinone as an electron acceptor. Part of the enzyme membrane arm which is embedded in the lipid bilayer and involved in proton translocation. This Rhyncholestes raphanurus (Chilean shrew opossum) protein is NADH-ubiquinone oxidoreductase chain 4L (MT-ND4L).